The following is a 474-amino-acid chain: Aspartyl/glutamyl-tRNA(Asn/Gln) amidotransferase subunit B (474 aa).

This sequence belongs to the GatB/GatE family. GatB subfamily. As to quaternary structure, heterotrimer of A, B and C subunits.

It carries out the reaction L-glutamyl-tRNA(Gln) + L-glutamine + ATP + H2O = L-glutaminyl-tRNA(Gln) + L-glutamate + ADP + phosphate + H(+). The catalysed reaction is L-aspartyl-tRNA(Asn) + L-glutamine + ATP + H2O = L-asparaginyl-tRNA(Asn) + L-glutamate + ADP + phosphate + 2 H(+). Its function is as follows. Allows the formation of correctly charged Asn-tRNA(Asn) or Gln-tRNA(Gln) through the transamidation of misacylated Asp-tRNA(Asn) or Glu-tRNA(Gln) in organisms which lack either or both of asparaginyl-tRNA or glutaminyl-tRNA synthetases. The reaction takes place in the presence of glutamine and ATP through an activated phospho-Asp-tRNA(Asn) or phospho-Glu-tRNA(Gln). This chain is Aspartyl/glutamyl-tRNA(Asn/Gln) amidotransferase subunit B, found in Wolbachia pipientis wMel.